The following is a 275-amino-acid chain: MAIRFFKAATPGTRHGSVLDFSEITHKKPEKALTSWWSRSKGRNNRGIITSRHRGGGHKRLYREIDFARAKVNVPAKVAYIEYDPNRNARIALVNYQDGEKKYILHPVGLQVGQTIIASPEASIAIGNCLPLVKIPLGTEVHNIELQPGSGGQLVRAAGTVAQIVAKEGTWASLRLPSGEVRLVSQNCWATIGRVGNIDAFNLTLGKAGRSRWLGRRPHVRGSAMNPVDHPHGGGEGRAPIGRARPVSPWGRPALGAKTRKRKKFSAALILQRRK.

The disordered stretch occupies residues 222-258 (GSAMNPVDHPHGGGEGRAPIGRARPVSPWGRPALGAK).

Belongs to the universal ribosomal protein uL2 family. Part of the 50S ribosomal subunit.

The protein localises to the plastid. Its subcellular location is the chloroplast. In Chlorella vulgaris (Green alga), this protein is Large ribosomal subunit protein uL2c (rpl2).